Consider the following 2067-residue polypeptide: Non-reducing polyketide synthase PKS12 (2067 aa).

An N-terminal acylcarrier protein transacylase (SAT) domain region spans residues phenylalanine 4 to histidine 241. Positions asparagine 350 to asparagine 373 are disordered. Over residues alanine 356–asparagine 373 the composition is skewed to polar residues. A Ketosynthase family 3 (KS3) domain is found at asparagine 373 to aspartate 808. Active-site for beta-ketoacyl synthase activity residues include cysteine 545, histidine 680, and histidine 725. The segment at phenylalanine 912–serine 1199 is malonyl-CoA:ACP transacylase (MAT) domain. Serine 1001 functions as the For acyl/malonyl transferase activity in the catalytic mechanism. An N-terminal hotdog fold region spans residues glutamine 1297–glutamine 1433. The 310-residue stretch at glutamine 1297–asparagine 1606 folds into the PKS/mFAS DH domain. The Proton acceptor; for dehydratase activity role is filled by histidine 1329. The tract at residues histidine 1329–valine 1604 is product template (PT) domain. The tract at residues leucine 1460–asparagine 1606 is C-terminal hotdog fold. Catalysis depends on aspartate 1519, which acts as the Proton donor; for dehydratase activity. Residues alanine 1619–threonine 1648 form a disordered region. In terms of domain architecture, Carrier spans threonine 1660–aspartate 1738. An O-(pantetheine 4'-phosphoryl)serine modification is found at serine 1698. Residues lysine 1742–serine 1779 are disordered. The segment covering serine 1743–serine 1754 has biased composition (low complexity). The claisen cyclase domain stretch occupies residues serine 1781–leucine 2065. Serine 1875 serves as the catalytic For Claisen cyclase activity.

It carries out the reaction 6 malonyl-CoA + acetyl-CoA + 6 H(+) = naphtopyrone YWA1 + 6 CO2 + 7 CoA + H2O. Its pathway is pigment biosynthesis. Functionally, non-reducing polyketide synthase; part of the gene cluster that mediates the biosynthesis of aurofusarin, a red mycelium pigment which is acting as a mycotoxin. The first step is performed by the polyketide synthase which condenses one acetyl-CoA and 6 malonyl-CoA units to form the first intermediate, the cyclic heptaketide and yellow pigment YWA1. The C2 hydroxyl group in the pyrone ring of YWA1 is probably formed during ring closure by an aldol-type cyclization reaction. The dehydratase aurZ then acts as the first tailoring enzyme in the aurofusarin biosynthetic pathway by converting YWA1 to nor-rubrofusarin. Nor-rubrofusarin is then methylated to rubrofusarin by the O-methyltransferase aurJ. Rubrofusarin is then transported across the plasma membrane by the rubrofusarin-specific pump aurT for further enzymatic processing by the extracellular complex composed of GIP1, aurF, aurO and aurS to yield aurofusarin. In Gibberella zeae (strain ATCC MYA-4620 / CBS 123657 / FGSC 9075 / NRRL 31084 / PH-1) (Wheat head blight fungus), this protein is Non-reducing polyketide synthase PKS12.